The primary structure comprises 540 residues: Chaperonin GroEL (540 aa).

Residues 29–32 (TIGP), 86–90 (DGTTT), G413, 476–478 (NAA), and D492 contribute to the ATP site.

Belongs to the chaperonin (HSP60) family. In terms of assembly, forms a cylinder of 14 subunits composed of two heptameric rings stacked back-to-back. Interacts with the co-chaperonin GroES.

It localises to the cytoplasm. It carries out the reaction ATP + H2O + a folded polypeptide = ADP + phosphate + an unfolded polypeptide.. Its function is as follows. Together with its co-chaperonin GroES, plays an essential role in assisting protein folding. The GroEL-GroES system forms a nano-cage that allows encapsulation of the non-native substrate proteins and provides a physical environment optimized to promote and accelerate protein folding. In Staphylococcus carnosus (strain TM300), this protein is Chaperonin GroEL.